Reading from the N-terminus, the 1358-residue chain is Retrotransposon-like protein 1 (1358 aa).

2 disordered regions span residues 1–159 and 563–616; these read MIEP…TEHS and ADVF…TAPW. Positions 19–30 are enriched in low complexity; that stretch reads SSKQMESSEGSS. Residues 65–79 show a composition bias toward acidic residues; the sequence is EMEELPTDLLQDMEE. A compositionally biased stretch (basic and acidic residues) spans 131-149; it reads AREEQEAHTDLKESGREET. A compositionally biased stretch (acidic residues) spans 583 to 592; that stretch reads GSDDLSESEP. Helical transmembrane passes span 1083–1099 and 1126–1146; these read LLYW…LVLL and LILD…TQLL. 2 disordered regions span residues 1250–1283 and 1338–1358; these read DGLQ…PRHL and QPRE…ANLD. A compositionally biased stretch (low complexity) spans 1267 to 1276; it reads APPSHTAATH. Over residues 1338 to 1347 the composition is skewed to basic and acidic residues; the sequence is QPREQARLEE. Residues 1348 to 1358 show a composition bias toward acidic residues; the sequence is LPDEDEDANLD.

Its subcellular location is the membrane. Functionally, plays an essential role in capillaries endothelial cells for the maintenance of feto-maternal interface and for development of the placenta. This Homo sapiens (Human) protein is Retrotransposon-like protein 1 (RTL1).